The following is a 350-amino-acid chain: Adenine deaminase (350 aa).

Zn(2+)-binding residues include His24, His26, and His207. The active-site Proton donor is the Glu210. Asp288 provides a ligand contact to Zn(2+). Asp289 contributes to the substrate binding site.

It belongs to the metallo-dependent hydrolases superfamily. Adenosine and AMP deaminases family. Adenine deaminase type 2 subfamily. Zn(2+) serves as cofactor.

The enzyme catalyses adenine + H2O + H(+) = hypoxanthine + NH4(+). Functionally, catalyzes the hydrolytic deamination of adenine to hypoxanthine. Plays an important role in the purine salvage pathway and in nitrogen catabolism. This is Adenine deaminase from Paraburkholderia phytofirmans (strain DSM 17436 / LMG 22146 / PsJN) (Burkholderia phytofirmans).